A 380-amino-acid polypeptide reads, in one-letter code: Flap endonuclease 1 (380 aa).

Residues 1–104 (MGIQGLAKLI…GELAKRSERR (104 aa)) form an N-domain region. Arginine 19 carries the symmetric dimethylarginine; by PRMT5 modification. Residue aspartate 34 participates in Mg(2+) binding. The DNA site is built by arginine 47 and arginine 70. Lysine 80 carries the N6-acetyllysine modification. Aspartate 86 lines the Mg(2+) pocket. Residues arginine 100 and arginine 104 each carry the symmetric dimethylarginine; by PRMT5 modification. The tract at residues 122–253 (EVEKFTKRLV…KRAVDLIQKH (132 aa)) is I-domain. Mg(2+)-binding residues include glutamate 158, glutamate 160, aspartate 179, and aspartate 181. Glutamate 158 lines the DNA pocket. A Phosphoserine; by CDK2 modification is found at serine 187. Arginine 192 carries the symmetric dimethylarginine; by PRMT5 modification. Serine 197 bears the Phosphoserine mark. Residues glycine 231 and aspartate 233 each contribute to the DNA site. Aspartate 233 is a binding site for Mg(2+). Phosphoserine is present on residues serine 255, serine 293, and serine 335. The disordered stretch occupies residues 327-380 (RLSKSRQGSTQGRLDDFFKVTGSLSSAKRKEPEPKGSTKKKAKTGAAGKFKRGK). Threonine 336 carries the phosphothreonine modification. An interaction with PCNA region spans residues 336–344 (TQGRLDDFF). Lysine 354 is subject to N6-acetyllysine. Positions 363 to 380 (STKKKAKTGAAGKFKRGK) are enriched in basic residues. The residue at position 364 (threonine 364) is a Phosphothreonine. N6-acetyllysine occurs at positions 375, 377, and 380.

The protein belongs to the XPG/RAD2 endonuclease family. FEN1 subfamily. In terms of assembly, interacts with PCNA. Three molecules of FEN1 bind to one PCNA trimer with each molecule binding to one PCNA monomer. PCNA stimulates the nuclease activity without altering cleavage specificity. The C-terminal domain binds EP300; can bind simultaneously to both PCNA and EP300. Interacts with DDX11; this interaction is direct and increases flap endonuclease activity of FEN1. Interacts with WDR4; regulating its endonuclease activity. Interacts with POLB. It depends on Mg(2+) as a cofactor. Acetylated by EP300. Acetylation inhibits both endonuclease and exonuclease activity. Acetylation also reduces DNA-binding activity but does not affect interaction with PCNA or EP300. Post-translationally, phosphorylation upon DNA damage induces relocalization to the nuclear plasma. Phosphorylation at Ser-187 by CDK2 occurs during late S-phase and results in dissociation from PCNA. In terms of processing, methylation at Arg-192 by PRMT5 impedes Ser-187 phosphorylation and increases interaction with PCNA.

The protein localises to the nucleus. Its subcellular location is the nucleolus. It is found in the nucleoplasm. The protein resides in the mitochondrion. Functionally, structure-specific nuclease with 5'-flap endonuclease and 5'-3' exonuclease activities involved in DNA replication and repair. During DNA replication, cleaves the 5'-overhanging flap structure that is generated by displacement synthesis when DNA polymerase encounters the 5'-end of a downstream Okazaki fragment. It enters the flap from the 5'-end and then tracks to cleave the flap base, leaving a nick for ligation. Also involved in the long patch base excision repair (LP-BER) pathway, by cleaving within the apurinic/apyrimidinic (AP) site-terminated flap. Acts as a genome stabilization factor that prevents flaps from equilibrating into structures that lead to duplications and deletions. Also possesses 5'-3' exonuclease activity on nicked or gapped double-stranded DNA, and exhibits RNase H activity. Also involved in replication and repair of rDNA and in repairing mitochondrial DNA. The chain is Flap endonuclease 1 from Macaca fascicularis (Crab-eating macaque).